Reading from the N-terminus, the 444-residue chain is Multidrug resistance protein MdtA (444 aa).

The signal sequence occupies residues 1-20 (MKSQSKRTSRLFVFVGVVVA). The segment covering 37–52 (NNTSGAQQSARGQDTS) has biased composition (polar residues). Disordered stretches follow at residues 37 to 60 (NNTSGAQQSARGQDTSHGGRRNTP) and 399 to 444 (PRSA…AEKS). Over residues 409–419 (ASAEKAAAEAE) the composition is skewed to low complexity. Residues 435–444 (ARSTTAAEKS) show a composition bias toward polar residues.

The protein belongs to the membrane fusion protein (MFP) (TC 8.A.1) family. Part of a tripartite efflux system composed of MdtA, MdtB and MdtC.

It localises to the cell inner membrane. This Yersinia pseudotuberculosis serotype I (strain IP32953) protein is Multidrug resistance protein MdtA.